We begin with the raw amino-acid sequence, 111 residues long: Large ribosomal subunit protein uL24 (111 aa).

Residues 85 to 111 (NTNDPRRKDIINRKASRQKEEQGGKAQ) form a disordered region. Residues 88-111 (DPRRKDIINRKASRQKEEQGGKAQ) show a composition bias toward basic and acidic residues.

Belongs to the universal ribosomal protein uL24 family. In terms of assembly, part of the 50S ribosomal subunit.

Its function is as follows. One of two assembly initiator proteins, it binds directly to the 5'-end of the 23S rRNA, where it nucleates assembly of the 50S subunit. In terms of biological role, located at the polypeptide exit tunnel on the outside of the subunit. The sequence is that of Large ribosomal subunit protein uL24 from Metallosphaera sedula (strain ATCC 51363 / DSM 5348 / JCM 9185 / NBRC 15509 / TH2).